The following is a 129-amino-acid chain: Small ribosomal subunit protein uS11 (129 aa).

The interval 108-129 is disordered; it reads EDVTPIPHDGTKPKGGKRGRRV.

It belongs to the universal ribosomal protein uS11 family. Part of the 30S ribosomal subunit.

In terms of biological role, located on the platform of the 30S subunit. This Methanothrix thermoacetophila (strain DSM 6194 / JCM 14653 / NBRC 101360 / PT) (Methanosaeta thermophila) protein is Small ribosomal subunit protein uS11.